The sequence spans 154 residues: 6,7-dimethyl-8-ribityllumazine synthase (154 aa).

5-amino-6-(D-ribitylamino)uracil-binding positions include Trp-22, 56–58 (AWE), and 80–82 (CVI). 85–86 (DT) is a binding site for (2S)-2-hydroxy-3-oxobutyl phosphate. His-88 functions as the Proton donor in the catalytic mechanism. Asn-113 is a 5-amino-6-(D-ribitylamino)uracil binding site. Arg-127 is a binding site for (2S)-2-hydroxy-3-oxobutyl phosphate.

This sequence belongs to the DMRL synthase family. Forms an icosahedral capsid composed of 60 subunits, arranged as a dodecamer of pentamers.

It carries out the reaction (2S)-2-hydroxy-3-oxobutyl phosphate + 5-amino-6-(D-ribitylamino)uracil = 6,7-dimethyl-8-(1-D-ribityl)lumazine + phosphate + 2 H2O + H(+). Its pathway is cofactor biosynthesis; riboflavin biosynthesis; riboflavin from 2-hydroxy-3-oxobutyl phosphate and 5-amino-6-(D-ribitylamino)uracil: step 1/2. In terms of biological role, catalyzes the formation of 6,7-dimethyl-8-ribityllumazine by condensation of 5-amino-6-(D-ribitylamino)uracil with 3,4-dihydroxy-2-butanone 4-phosphate. This is the penultimate step in the biosynthesis of riboflavin. The chain is 6,7-dimethyl-8-ribityllumazine synthase from Xanthomonas campestris pv. campestris (strain 8004).